A 129-amino-acid chain; its full sequence is Phosphoribosyl-AMP cyclohydrolase (129 aa).

Mg(2+) is bound at residue Asp77. Zn(2+) is bound at residue Cys78. 2 residues coordinate Mg(2+): Asp79 and Asp81. Zn(2+)-binding residues include Cys94 and Cys101.

This sequence belongs to the PRA-CH family. Homodimer. The cofactor is Mg(2+). Zn(2+) is required as a cofactor.

The protein localises to the cytoplasm. The catalysed reaction is 1-(5-phospho-beta-D-ribosyl)-5'-AMP + H2O = 1-(5-phospho-beta-D-ribosyl)-5-[(5-phospho-beta-D-ribosylamino)methylideneamino]imidazole-4-carboxamide. Its pathway is amino-acid biosynthesis; L-histidine biosynthesis; L-histidine from 5-phospho-alpha-D-ribose 1-diphosphate: step 3/9. Its function is as follows. Catalyzes the hydrolysis of the adenine ring of phosphoribosyl-AMP. In Methanosphaera stadtmanae (strain ATCC 43021 / DSM 3091 / JCM 11832 / MCB-3), this protein is Phosphoribosyl-AMP cyclohydrolase.